The chain runs to 406 residues: Peptidase T (406 aa).

Zn(2+) is bound at residue histidine 78. Residue aspartate 80 is part of the active site. Residue aspartate 139 participates in Zn(2+) binding. Glutamate 173 serves as the catalytic Proton acceptor. Positions 174, 196, and 378 each coordinate Zn(2+).

It belongs to the peptidase M20B family. Zn(2+) serves as cofactor.

The protein localises to the cytoplasm. The enzyme catalyses Release of the N-terminal residue from a tripeptide.. Functionally, cleaves the N-terminal amino acid of tripeptides. The chain is Peptidase T from Clostridium perfringens (strain SM101 / Type A).